Consider the following 437-residue polypeptide: Transcription factor AP-2-alpha (437 aa).

Lys-10 participates in a covalent cross-link: Glycyl lysine isopeptide (Lys-Gly) (interchain with G-Cter in SUMO); alternate. A Glycyl lysine isopeptide (Lys-Gly) (interchain with G-Cter in SUMO2); alternate cross-link involves residue Lys-10. The interval 14-107 (CEDRHDGTSN…GQRQSQESGL (94 aa)) is disordered. Positions 57–62 (YFPPPY) match the PPxY motif motif. Composition is skewed to low complexity over residues 65-74 (IYPQSQDPYS) and 88-101 (QPQP…GQRQ). Glycyl lysine isopeptide (Lys-Gly) (interchain with G-Cter in SUMO2) cross-links involve residues Lys-177 and Lys-184. Ser-239 carries the phosphoserine; by PKA modification. Residues 280 to 410 (RRKAANVTLL…YLTEALKAMD (131 aa)) form an H-S-H (helix-span-helix), dimerization region. Positions 414–427 (LSNNPNSHTDNNAK) are enriched in polar residues. Residues 414-437 (LSNNPNSHTDNNAKSSDKEEKHRK) form a disordered region. Over residues 428–437 (SSDKEEKHRK) the composition is skewed to basic and acidic residues.

This sequence belongs to the AP-2 family. Binds DNA as a dimer. Can form homodimers or heterodimers with other AP-2 family members. Interacts with WWOX. Interacts with CITED4. Interacts with UBE2I. Interacts with RALBP1 in a complex also containing EPN1 and NUMB during interphase and mitosis. Interacts with KCTD1; this interaction represses transcription activation. Interacts (via C-terminus) with CITED2 (via C-terminus); the interaction stimulates TFAP2A-transcriptional activation. Interacts (via N-terminus) with EP300 (via N-terminus); the interaction requires CITED2. Interacts with KCTD15; this interaction inhibits TFAP2A transcriptional activation. In terms of processing, sumoylated on Lys-10; which inhibits transcriptional activity.

It is found in the nucleus. Functionally, sequence-specific DNA-binding protein that interacts with inducible viral and cellular enhancer elements to regulate transcription of selected genes. AP-2 factors bind to the consensus sequence 5'-GCCNNNGGC-3' and activate genes involved in a large spectrum of important biological functions including proper eye, face, body wall, limb and neural tube development. They also suppress a number of genes including MCAM/MUC18, C/EBP alpha and MYC. AP-2-alpha is the only AP-2 protein required for early morphogenesis of the lens vesicle. Together with the CITED2 coactivator, stimulates the PITX2 P1 promoter transcription activation. Associates with chromatin to the PITX2 P1 promoter region. This chain is Transcription factor AP-2-alpha (TFAP2A), found in Homo sapiens (Human).